Consider the following 187-residue polypeptide: Nucleoside-triphosphatase THEP1 (187 aa).

Residues 9–16 and 100–107 contribute to the ATP site; these read GRPGVGKT and LIAIDEIG.

Belongs to the THEP1 NTPase family.

It carries out the reaction a ribonucleoside 5'-triphosphate + H2O = a ribonucleoside 5'-diphosphate + phosphate + H(+). Its function is as follows. Has nucleotide phosphatase activity towards ATP, GTP, CTP, TTP and UTP. May hydrolyze nucleoside diphosphates with lower efficiency. The polypeptide is Nucleoside-triphosphatase THEP1 (Hyperthermus butylicus (strain DSM 5456 / JCM 9403 / PLM1-5)).